Here is a 414-residue protein sequence, read N- to C-terminus: Nucleoporin NUP42 (414 aa).

The C3H1-type zinc-finger motif lies at 1–25 (MPVCNFFLQGRCRYGDTCWNEHPTG). 2 disordered regions span residues 24 to 73 (TGGR…RGAA) and 200 to 221 (PPAS…TSGF). FG repeat units lie at residues 43–44 (FG), 207–208 (FG), 214–215 (FG), 221–222 (FG), 233–234 (FG), 238–239 (FG), 257–258 (FG), 268–269 (FG), 280–281 (FG), 306–307 (FG), 325–326 (FG), 329–330 (FG), 335–336 (FG), 341–342 (FG), 347–348 (FG), 351–352 (FG), and 362–363 (FG).

Probable component of the nuclear pore complex (NPC).

It is found in the nucleus. It localises to the nuclear pore complex. Its subcellular location is the nucleus membrane. In terms of biological role, required for the export of mRNAs containing poly(A) tails from the nucleus into the cytoplasm. The chain is Nucleoporin NUP42 (nup42) from Danio rerio (Zebrafish).